Consider the following 318-residue polypeptide: Malate dehydrogenase (318 aa).

NAD(+) is bound by residues 10–15 (GGGQIG) and aspartate 34. Substrate-binding residues include arginine 83 and arginine 89. Residues asparagine 96 and 119 to 121 (ISN) each bind NAD(+). Substrate is bound by residues asparagine 121 and arginine 152. The Proton acceptor role is filled by histidine 176.

This sequence belongs to the LDH/MDH superfamily. MDH type 3 family.

The catalysed reaction is (S)-malate + NAD(+) = oxaloacetate + NADH + H(+). Its function is as follows. Catalyzes the reversible oxidation of malate to oxaloacetate. In Geotalea uraniireducens (strain Rf4) (Geobacter uraniireducens), this protein is Malate dehydrogenase.